A 55-amino-acid chain; its full sequence is HTH-type transcriptional regulator MerD (55 aa).

The region spanning 3–55 is the HTH merR-type domain; sequence AYTVSRLALDAGVSVHIVRDYLLRGLLRPVACTPGGYGLFDDAALQRLCFVRA. A DNA-binding region (H-T-H motif) is located at residues 6-25; the sequence is VSRLALDAGVSVHIVRDYLL.

This Pseudomonas fluorescens protein is HTH-type transcriptional regulator MerD (merD).